The following is a 187-amino-acid chain: Ion-translocating oxidoreductase complex subunit B (187 aa).

The tract at residues 1-26 (MTHILFAVLVLALLALAFGIILGFAA) is hydrophobic. Residues 32–90 (EADPIVDQLDALLPQTQCGQCGYPGCKPYAEALANGDQINKCVPGGDATMRKIADLMGV) form the 4Fe-4S domain. 12 residues coordinate [4Fe-4S] cluster: C49, C52, C57, C73, C115, C118, C121, C125, C145, C148, C151, and C155. 2 consecutive 4Fe-4S ferredoxin-type domains span residues 106 to 135 (KVAFIHEDQCIGCTKCIQACPVDAIVGATK) and 136 to 165 (AMHTVITDECTGCDLCVDPCPTDCIEMIPV).

This sequence belongs to the 4Fe4S bacterial-type ferredoxin family. RnfB subfamily. As to quaternary structure, the complex is composed of six subunits: RnfA, RnfB, RnfC, RnfD, RnfE and RnfG. [4Fe-4S] cluster is required as a cofactor.

It is found in the cell inner membrane. Part of a membrane-bound complex that couples electron transfer with translocation of ions across the membrane. The polypeptide is Ion-translocating oxidoreductase complex subunit B (Aeromonas salmonicida (strain A449)).